The following is a 338-amino-acid chain: NADPH dehydrogenase (338 aa).

22-25 (SPMC) lines the FMN pocket. Position 27 (tyrosine 27) interacts with substrate. Residues alanine 59 and glutamine 101 each contribute to the FMN site. Residue 163-166 (HAAH) participates in substrate binding. FMN-binding positions include arginine 214 and 306–307 (GR).

Belongs to the NADH:flavin oxidoreductase/NADH oxidase family. NamA subfamily. In terms of assembly, homotetramer. Requires FMN as cofactor.

The catalysed reaction is A + NADPH + H(+) = AH2 + NADP(+). Its function is as follows. Catalyzes the reduction of the double bond of an array of alpha,beta-unsaturated aldehydes and ketones. It also reduces the nitro group of nitroester and nitroaromatic compounds. It could have a role in detoxification processes. The chain is NADPH dehydrogenase from Listeria welshimeri serovar 6b (strain ATCC 35897 / DSM 20650 / CCUG 15529 / CIP 8149 / NCTC 11857 / SLCC 5334 / V8).